The primary structure comprises 298 residues: Cholesterol 25-hydroxylase (298 aa).

Residue Asn5 is glycosylated (N-linked (GlcNAc...) asparagine). The next 3 membrane-spanning stretches (helical) occupy residues 38–58, 84–104, and 124–144; these read FFPV…FVVL, LLPC…PVTL, and LLSH…AWHL. Positions 128 to 263 constitute a Fatty acid hydroxylase domain; that stretch reads VLICLLLFDT…FTHWDKMLGT (136 aa). The Histidine box-1 motif lies at 142–146; it reads WHLLH. The Histidine box-2 signature appears at 157 to 161; that stretch reads HKVHH. N-linked (GlcNAc...) asparagine glycosylation occurs at Asn163. The next 2 membrane-spanning stretches (helical) occupy residues 167–187 and 190–210; these read FALA…FFDV and VAML…NIWL. Positions 238–244 match the Histidine box-3 motif; that stretch reads HHDLHHS.

This sequence belongs to the sterol desaturase family. It depends on Fe cation as a cofactor. N-glycosylated. In terms of tissue distribution, expressed in testicular macrophages at all stages, with the highest level in 10 day old animals.

The protein localises to the endoplasmic reticulum membrane. It carries out the reaction cholesterol + AH2 + O2 = 25-hydroxycholesterol + A + H2O. The catalysed reaction is cholesterol + NADPH + O2 + H(+) = 25-hydroxycholesterol + NADP(+) + H2O. Its function is as follows. Catalyzes the formation of 25-hydroxycholesterol from cholesterol, leading to repress cholesterol biosynthetic enzymes. Plays a key role in cell positioning and movement in lymphoid tissues: 25-hydroxycholesterol is an intermediate in biosynthesis of 7-alpha,25-dihydroxycholesterol (7-alpha,25-OHC), an oxysterol that acts as a ligand for the G protein-coupled receptor GPR183/EBI2, a chemotactic receptor for a number of lymphoid cells. May play an important role in regulating lipid metabolism by synthesizing a corepressor that blocks sterol regulatory element binding protein (SREBP) processing. In testis, production of 25-hydroxycholesterol by macrophages plays a role in Leydig cell differentiation. Required to restrain inflammation in macrophages: production of 25-hydroxycholesterol protects macrophages from cholesterol overload, thereby preventing mitochondrial DNA release and subsequent activation of the AIM2 inflammasome. Interferon-stimulated gene which has broad antiviral activities against a wide range of enveloped viruses. Functionally, catalyzes the formation of 25-hydroxycholesterol from cholesterol, leading to repress cholesterol biosynthetic enzymes. Plays a key role in cell positioning and movement in lymphoid tissues: 25-hydroxycholesterol is an intermediate in biosynthesis of 7-alpha,25-dihydroxycholesterol (7-alpha,25-OHC), an oxysterol that acts as a ligand for the G protein-coupled receptor GPR183/EBI2, a chemotactic receptor for a number of lymphoid cells. May play an important role in regulating lipid metabolism by synthesizing a corepressor that blocks sterol regulatory element binding protein (SREBP) processing. As an interferon-stimulated gene, has broad antiviral activities against a wide range of enveloped viruses. Its product, 25-hydroxycholesterol, activates the ER-localized enzyme ACAT to induce internalization of accessible cholesterol on the plasma membrane and restricts virus-host membranes fusion which inhibits virus replication. In testis, production of 25-hydroxycholesterol by macrophages plays a role in Leydig cell differentiation. The protein is Cholesterol 25-hydroxylase of Rattus norvegicus (Rat).